The following is a 249-amino-acid chain: Carboxy-S-adenosyl-L-methionine synthase (249 aa).

Residues Tyr-39, 64-66 (GCS), 117-118 (DI), Asn-132, and Arg-199 each bind S-adenosyl-L-methionine.

Belongs to the class I-like SAM-binding methyltransferase superfamily. Cx-SAM synthase family. Homodimer.

It catalyses the reaction prephenate + S-adenosyl-L-methionine = carboxy-S-adenosyl-L-methionine + 3-phenylpyruvate + H2O. Catalyzes the conversion of S-adenosyl-L-methionine (SAM) to carboxy-S-adenosyl-L-methionine (Cx-SAM). The polypeptide is Carboxy-S-adenosyl-L-methionine synthase (Aeromonas hydrophila subsp. hydrophila (strain ATCC 7966 / DSM 30187 / BCRC 13018 / CCUG 14551 / JCM 1027 / KCTC 2358 / NCIMB 9240 / NCTC 8049)).